The chain runs to 82 residues: ATP synthase subunit c, chloroplastic (82 aa).

Helical transmembrane passes span 3–23 and 57–77; these read PIVA…AAIG and FAFM…LLFA.

Belongs to the ATPase C chain family. F-type ATPases have 2 components, F(1) - the catalytic core - and F(0) - the membrane proton channel. F(1) has five subunits: alpha(3), beta(3), gamma(1), delta(1), epsilon(1). F(0) has four main subunits: a(1), b(1), b'(1) and c(10-14). The alpha and beta chains form an alternating ring which encloses part of the gamma chain. F(1) is attached to F(0) by a central stalk formed by the gamma and epsilon chains, while a peripheral stalk is formed by the delta, b and b' chains.

The protein localises to the plastid. The protein resides in the chloroplast thylakoid membrane. In terms of biological role, f(1)F(0) ATP synthase produces ATP from ADP in the presence of a proton or sodium gradient. F-type ATPases consist of two structural domains, F(1) containing the extramembraneous catalytic core and F(0) containing the membrane proton channel, linked together by a central stalk and a peripheral stalk. During catalysis, ATP synthesis in the catalytic domain of F(1) is coupled via a rotary mechanism of the central stalk subunits to proton translocation. Key component of the F(0) channel; it plays a direct role in translocation across the membrane. A homomeric c-ring of between 10-14 subunits forms the central stalk rotor element with the F(1) delta and epsilon subunits. The polypeptide is ATP synthase subunit c, chloroplastic (Chlorella vulgaris (Green alga)).